Reading from the N-terminus, the 440-residue chain is Transposon Ty1-ML1 Gag polyprotein (440 aa).

3 stretches are compositionally biased toward polar residues: residues 1–23, 48–60, and 127–152; these read MESQ…SVTS, TKAN…TPAS, and QSQF…GNTF. 3 disordered regions span residues 1–88, 126–173, and 352–440; these read MESQ…YPQQ, PQSQ…RPPP, and GSRN…PETY. The segment covering 153–165 has biased composition (low complexity); the sequence is TDSSSADSDMTST. The tract at residues 299-401 is RNA-binding; sequence NNGIHINNKV…NSKSKTARAH (103 aa). Positions 402-418 are enriched in low complexity; it reads NVSTSNNSPSTDNDSIS. Ser-416 bears the Phosphoserine mark. Over residues 419–428 the composition is skewed to polar residues; the sequence is KSTTEPIQLN. The span at 429 to 440 shows a compositional bias: basic and acidic residues; sequence NKHDLHLRPETY.

As to quaternary structure, homotrimer.

Its subcellular location is the cytoplasm. Capsid protein (CA) is the structural component of the virus-like particle (VLP), forming the shell that encapsulates the retrotransposons dimeric RNA genome. The particles are assembled from trimer-clustered units and there are holes in the capsid shells that allow for the diffusion of macromolecules. CA also has nucleocapsid-like chaperone activity, promoting primer tRNA(i)-Met annealing to the multipartite primer-binding site (PBS), dimerization of Ty1 RNA and initiation of reverse transcription. This chain is Transposon Ty1-ML1 Gag polyprotein (TY1A-ML1), found in Saccharomyces cerevisiae (strain ATCC 204508 / S288c) (Baker's yeast).